Here is a 621-residue protein sequence, read N- to C-terminus: Signal recognition particle receptor subunit alpha homolog (621 aa).

The segment at 1–158 (MFDQLAVFTP…KKFEQYFRIK (158 aa)) is SRX. The segment at 167-217 (HINPDNFTKNGSVPQSHNKNTKKKLRDTKGKKQSTGNVGSGRKWGRDGGML) is disordered. A compositionally biased stretch (polar residues) spans 171 to 183 (DNFTKNGSVPQSH). Over residues 185–198 (KNTKKKLRDTKGKK) the composition is skewed to basic residues. Residue Ser-239 is modified to Phosphoserine. Positions 398-620 (YVFSIVGVNG…SVKWAVNTLM (223 aa)) are NG domain. Residues 404-411 (GVNGVGKS) and 510-514 (DTAGR) contribute to the GTP site. Ser-523 bears the Phosphoserine mark. 572 to 575 (SKCD) is a GTP binding site.

It belongs to the GTP-binding SRP family. Heterodimer of an alpha and a beta chain.

Its subcellular location is the endoplasmic reticulum membrane. Component of the SRP (signal recognition particle) receptor (SR). Ensures, in conjunction with the signal recognition particle, the correct targeting of the nascent secretory proteins to the endoplasmic reticulum membrane system. GTP hydrolysis may enhance the fidelity of and provide unidirectionality to the targeting reaction. It is important but not essential for cell growth. May be directly involved in mitochondrial protein import. The sequence is that of Signal recognition particle receptor subunit alpha homolog (SRP101) from Saccharomyces cerevisiae (strain ATCC 204508 / S288c) (Baker's yeast).